Here is an 861-residue protein sequence, read N- to C-terminus: Transcription factor opdJ (861 aa).

The segment at residues 11-37 (CSHCSKAKARCDRKVPCSRCVSKQLVC) is a DNA-binding region (zn(2)-C6 fungal-type).

It localises to the nucleus. In terms of biological role, transcription factor that positively regulates the gene cluster that mediates the biosynthesis of oxopyrrolidines, polyketide-amino acid hybrid compounds with feature structures of tetramic acid. The sequence is that of Transcription factor opdJ from Penicillium oxalicum (strain 114-2 / CGMCC 5302) (Penicillium decumbens).